The sequence spans 292 residues: Zinc finger protein SNAI3 (292 aa).

The interval 1–20 (MPRSFLVKTHSSHRVPNYRR) is SNAG domain. 4 C2H2-type zinc fingers span residues 152–174 (FECF…RQLH), 183–205 (FTCK…IRTH), 209–231 (CTCK…VRTH), and 237–259 (YACS…LQTH). Residues 265–287 (YRCRRCTKTFSRMSLLARHEESG) form a C2H2-type 5; degenerate zinc finger.

The protein belongs to the snail C2H2-type zinc-finger protein family.

The protein localises to the nucleus. Its function is as follows. Seems to inhibit myoblast differentiation. Transcriptional repressor of E-box-dependent transactivation of downstream myogenic bHLHs genes. Binds preferentially to the canonical E-box sequences 5'-CAGGTG-3' and 5'-CACCTG-3'. The protein is Zinc finger protein SNAI3 (SNAI3) of Homo sapiens (Human).